We begin with the raw amino-acid sequence, 449 residues long: XK-related protein 2 (449 aa).

Helical transmembrane passes span F35 to V55, T68 to V88, L98 to I118, I174 to S194, L204 to I224, L241 to F261, A269 to W289, V306 to C326, L357 to N377, and L382 to F402.

It belongs to the XK family.

The protein resides in the membrane. This chain is XK-related protein 2 (Xkrx), found in Mus musculus (Mouse).